A 142-amino-acid chain; its full sequence is Large ribosomal subunit protein uL16 (142 aa).

It belongs to the universal ribosomal protein uL16 family. In terms of assembly, part of the 50S ribosomal subunit.

In terms of biological role, binds 23S rRNA and is also seen to make contacts with the A and possibly P site tRNAs. The sequence is that of Large ribosomal subunit protein uL16 from Thermotoga sp. (strain RQ2).